The chain runs to 190 residues: Shikimate kinase (190 aa).

Position 14–19 (14–19 (GAGKST)) interacts with ATP. Serine 18 lines the Mg(2+) pocket. 3 residues coordinate substrate: aspartate 36, arginine 60, and glycine 82. Arginine 120 contributes to the ATP binding site. Residue arginine 139 participates in substrate binding.

It belongs to the shikimate kinase family. In terms of assembly, monomer. The cofactor is Mg(2+).

Its subcellular location is the cytoplasm. The enzyme catalyses shikimate + ATP = 3-phosphoshikimate + ADP + H(+). It participates in metabolic intermediate biosynthesis; chorismate biosynthesis; chorismate from D-erythrose 4-phosphate and phosphoenolpyruvate: step 5/7. Functionally, catalyzes the specific phosphorylation of the 3-hydroxyl group of shikimic acid using ATP as a cosubstrate. The protein is Shikimate kinase of Thioalkalivibrio sulfidiphilus (strain HL-EbGR7).